The following is a 248-amino-acid chain: MQYNFKVESFEGPLDLLLHLIHRYEIDIYNIPVAEITEQYLSYIHTMKELQLDVASEYLVMAATLLQIKSKMLLPKQEEDVHDSGEDFIDDPRQELMERLIEYKKYKQVAAELKEREQERAQLYTRPPIDFTSFQQEEAANLPLDVTLYDMLAAFQKMMRRKKSKRPVTARITRQEIPIEQRMTDILQKLETLGGRQSFYDLFADEEREVMVVTFLAILELMKHQQIVIEQEQNFDEIFLSCANHNSK.

It belongs to the ScpA family. Component of a cohesin-like complex composed of ScpA, ScpB and the Smc homodimer, in which ScpA and ScpB bind to the head domain of Smc. The presence of the three proteins is required for the association of the complex with DNA.

It is found in the cytoplasm. In terms of biological role, participates in chromosomal partition during cell division. May act via the formation of a condensin-like complex containing Smc and ScpB that pull DNA away from mid-cell into both cell halves. The chain is Segregation and condensation protein A from Bacillus cytotoxicus (strain DSM 22905 / CIP 110041 / 391-98 / NVH 391-98).